The sequence spans 447 residues: N-succinylarginine dihydrolase (447 aa).

Substrate contacts are provided by residues alanine 19 to serine 28, asparagine 110, and histidine 137 to arginine 138. Residue glutamate 174 is part of the active site. A substrate-binding site is contributed by arginine 212. Histidine 248 is a catalytic residue. Substrate-binding residues include aspartate 250 and asparagine 359. Cysteine 365 functions as the Nucleophile in the catalytic mechanism.

The protein belongs to the succinylarginine dihydrolase family. As to quaternary structure, homodimer.

The enzyme catalyses N(2)-succinyl-L-arginine + 2 H2O + 2 H(+) = N(2)-succinyl-L-ornithine + 2 NH4(+) + CO2. It participates in amino-acid degradation; L-arginine degradation via AST pathway; L-glutamate and succinate from L-arginine: step 2/5. In terms of biological role, catalyzes the hydrolysis of N(2)-succinylarginine into N(2)-succinylornithine, ammonia and CO(2). This is N-succinylarginine dihydrolase from Escherichia coli O139:H28 (strain E24377A / ETEC).